We begin with the raw amino-acid sequence, 227 residues long: Venom allergen 5 (227 aa).

Positions 1–23 (MEISGLVYLIIIVTIIDLPYGKA) are cleaved as a signal peptide. Disulfide bonds link C27/C40, C31/C124, C49/C117, and C193/C210. Positions 68–212 (LKEHNDFRQK…WHYHYLVCNY (145 aa)) constitute an SCP domain.

This sequence belongs to the CRISP family. Venom allergen 5-like subfamily. In terms of tissue distribution, expressed by the venom gland.

The protein resides in the secreted. The polypeptide is Venom allergen 5 (Vespula maculifrons (Eastern yellow jacket)).